The chain runs to 213 residues: Histone H1.2 (213 aa).

A compositionally biased stretch (low complexity) spans 1 to 17 (MSETAPAAPAAAPPAEK). Residues 1–41 (MSETAPAAPAAAPPAEKTPVKKKAAKKPAGARRKASGPPVS) are disordered. Serine 2 is subject to N-acetylserine; partial. At serine 2 the chain carries Phosphoserine. An N6-acetyllysine modification is found at lysine 17. Positions 20 to 35 (VKKKAAKKPAGARRKA) are enriched in basic residues. N6-(2-hydroxyisobutyryl)lysine is present on residues lysine 23, lysine 26, and lysine 27. An N6-(beta-hydroxybutyryl)lysine; alternate modification is found at lysine 34. Lysine 34 carries the N6-crotonyllysine; alternate modification. An N6-methyllysine; alternate modification is found at lysine 34. An H15 domain is found at 36–109 (SGPPVSELIT…GASGSFKLNK (74 aa)). Lysine 46 carries the N6-(2-hydroxyisobutyryl)lysine modification. An N6-(beta-hydroxybutyryl)lysine; alternate modification is found at lysine 52. An N6-(2-hydroxyisobutyryl)lysine; alternate modification is found at lysine 52. Arginine 54 carries the post-translational modification Citrulline. N6-(2-hydroxyisobutyryl)lysine is present on lysine 63. Position 64 is an N6-(beta-hydroxybutyryl)lysine; alternate (lysine 64). Lysine 64 is subject to N6-crotonyllysine; alternate. Position 64 is an N6-(2-hydroxyisobutyryl)lysine; alternate (lysine 64). N6-(2-hydroxyisobutyryl)lysine is present on residues lysine 75 and lysine 81. N6-(beta-hydroxybutyryl)lysine; alternate occurs at positions 85 and 90. N6-crotonyllysine; alternate occurs at positions 85, 90, and 97. 3 positions are modified to N6-(2-hydroxyisobutyryl)lysine; alternate: lysine 85, lysine 90, and lysine 97. Positions 95-213 (QTKGTGASGS…KPKKAAPKKK (119 aa)) are disordered. Residue lysine 97 is modified to N6-succinyllysine; alternate. At serine 104 the chain carries Phosphoserine; by PKC. Lysine 106 is modified (N6-(beta-hydroxybutyryl)lysine). An N6-(2-hydroxyisobutyryl)lysine mark is found at lysine 110, lysine 117, lysine 121, lysine 129, and lysine 136. The span at 119-140 (KAKKAGAAKPKKAAGAAKKTKK) shows a compositional bias: basic residues. Threonine 146 carries the post-translational modification Phosphothreonine. At lysine 148 the chain carries N6-(2-hydroxyisobutyryl)lysine. Over residues 149–160 (KTAKKTPKKAKK) the composition is skewed to basic residues. N6-crotonyllysine; alternate occurs at positions 159 and 168. N6-(2-hydroxyisobutyryl)lysine; alternate is present on residues lysine 159 and lysine 168. The span at 169–186 (KVAKSPKKAKAAKPKKAA) shows a compositional bias: basic residues. At lysine 187 the chain carries N6-methyllysine; by EHMT1 and EHMT2. ADP-ribosylserine is present on serine 188. Positions 193–213 (VKPKAAKPKVAKPKKAAPKKK) are enriched in basic residues.

The protein belongs to the histone H1/H5 family. In terms of processing, H1 histones are progressively phosphorylated during the cell cycle, becoming maximally phosphorylated during late G2 phase and M phase, and being dephosphorylated sharply thereafter. Crotonylation (Kcr) is specifically present in male germ cells and marks testis-specific genes in post-meiotic cells, including X-linked genes that escape sex chromosome inactivation in haploid cells. Crotonylation marks active promoters and enhancers and confers resistance to transcriptional repressors. It is also associated with post-meiotically activated genes on autosomes. Post-translationally, ADP-ribosylated on Ser-188 in response to DNA damage. In terms of processing, citrullination at Arg-54 (H1R54ci) by PADI4 takes place within the DNA-binding site of H1 and results in its displacement from chromatin and global chromatin decondensation, thereby promoting pluripotency and stem cell maintenance.

It is found in the nucleus. The protein localises to the chromosome. In terms of biological role, histone H1 protein binds to linker DNA between nucleosomes forming the macromolecular structure known as the chromatin fiber. Histones H1 are necessary for the condensation of nucleosome chains into higher-order structured fibers. Also acts as a regulator of individual gene transcription through chromatin remodeling, nucleosome spacing and DNA methylation. This chain is Histone H1.2, found in Bos taurus (Bovine).